The following is a 1251-amino-acid chain: Botulinum neurotoxin type E (1251 aa).

A Zn(2+)-binding site is contributed by His212. The active site involves Glu213. Zn(2+) contacts are provided by His216 and Glu251. Cys412 and Cys426 are disulfide-bonded. Positions 423-819 (KSICIEINNG…ELNSMVIDTL (397 aa)) are translocation domain (TD). A belt region spans residues 466–515 (NDLDQVILNFNSESAPGLSDEKLNLTIQNDAYIPKYDSNGTSDIEQHDVN). The segment at 845 to 1067 (KRIKSSSVLN…EIQTLYNNEP (223 aa)) is N-terminus of receptor binding domain (N-RBD). A C-terminus of receptor binding domain (C-RBD) region spans residues 1068–1251 (NANILKDFWG…ISEEHGWQEK (184 aa)). Positions 1221–1224 (STWY) match the Host ganglioside-binding motif motif.

The protein belongs to the peptidase M27 family. Heterodimer; disulfide-linked heterodimer of a light chain (LC) and a heavy chain (HC). The LC has the proteolytic/pharmacological activity, while the N- and C-terminal of the HC mediate channel formation and toxin binding, respectively. Interacts with host synaptic vesicle glycoproteins SV2A and SV2B which probably serve as coreceptors. Requires Zn(2+) as cofactor.

The protein resides in the secreted. Its subcellular location is the host cytoplasm. The protein localises to the host cytosol. It localises to the host synapse. It is found in the host presynaptic cell membrane. The protein resides in the host cytoplasmic vesicle. Its subcellular location is the host secretory vesicle. The protein localises to the host synaptic vesicle membrane. The catalysed reaction is Limited hydrolysis of proteins of the neuroexocytosis apparatus, synaptobrevins, SNAP25 or syntaxin. No detected action on small molecule substrates.. In terms of biological role, botulinum toxin causes flaccid paralysis by inhibiting neurotransmitter (acetylcholine) release from the presynaptic membranes of nerve terminals of eukaryotic host skeletal and autonomic nervous system, with frequent heart or respiratory failure. Precursor of botulinum neurotoxin E which has 2 coreceptors; complex polysialylated gangliosides found on neural tissue and specific membrane-anchored proteins found in synaptic vesicles. Receptor proteins are exposed on host presynaptic cell membrane during neurotransmitter release, when the toxin heavy chain (HC) binds to them. Upon synaptic vesicle recycling the toxin is taken up via the endocytic pathway. When the pH of the toxin-containing endosome drops a structural rearrangement occurs so that the N-terminus of the HC forms pores that allows the light chain (LC) to translocate into the cytosol. Once in the cytosol the disulfide bond linking the 2 subunits is reduced and LC cleaves its target protein on synaptic vesicles, preventing their fusion with the cytoplasmic membrane and thus neurotransmitter release. Functionally, has proteolytic activity. After translocation into the eukaryotic host cytosol, LC hydrolyzes the '180-Arg-|-Ile-181' bond in SNAP25, blocking neurotransmitter release. Its function is as follows. Responsible for host epithelial cell transcytosis, host nerve cell targeting and translocation of light chain (LC) into host cytosol. Composed of 3 subdomains; the translocation domain (TD), and N-terminus and C-terminus of the receptor-binding domain (RBD). The RBD is responsible for the adherence of the toxin to the cell surface. It simultaneously recognizes 2 coreceptors; host polysialated gangliosides and the receptor proteins SV2A and SV2B in close proximity on host synaptic vesicles. Interaction with SV2 proteins requires SV2 glycosylation. The N-terminus of the TD wraps an extended belt around the perimeter of the LC, protecting Zn(2+) in the active site; it may also prevent premature LC dissociation from the translocation channel and protect toxin prior to translocation. The TD inserts into synaptic vesicle membrane to allow translocation into the host cytosol. Binds ganglioside GD1a in vitro. The polypeptide is Botulinum neurotoxin type E (Clostridium butyricum).